Reading from the N-terminus, the 209-residue chain is Putative amino acid efflux protein YcgF (209 aa).

6 helical membrane-spanning segments follow: residues 1-21 (MNIF…VGPV), 39-59 (IFGL…YFGL), 62-82 (FLTA…VLTY), 110-130 (FASG…WLGI), 147-167 (LLIY…CMAI), and 184-204 (LTGI…YQGI).

This sequence belongs to the Rht family.

Its subcellular location is the cell membrane. The chain is Putative amino acid efflux protein YcgF (ycgF) from Bacillus subtilis (strain 168).